The sequence spans 107 residues: EMBRYO SURROUNDING FACTOR 1-like protein 5 (107 aa).

Positions M1 to C22 are cleaved as a signal peptide. 4 disulfide bridges follow: C35/C49, C40/C69, C47/C65, and C50/C58. Residues G87–L107 traverse the membrane as a helical segment.

Belongs to the MEG family. As to expression, expressed in flowers.

The protein localises to the membrane. In Arabidopsis thaliana (Mouse-ear cress), this protein is EMBRYO SURROUNDING FACTOR 1-like protein 5 (ESFL5).